Consider the following 210-residue polypeptide: Guanylate kinase (210 aa).

In terms of domain architecture, Guanylate kinase-like spans 6–186; the sequence is GVILVLSSPS…TADRISNILR (181 aa). Residue 13-20 coordinates ATP; sequence SPSGCGKT.

This sequence belongs to the guanylate kinase family.

The protein resides in the cytoplasm. The catalysed reaction is GMP + ATP = GDP + ADP. Essential for recycling GMP and indirectly, cGMP. In Anaplasma phagocytophilum (strain HZ), this protein is Guanylate kinase.